Consider the following 301-residue polypeptide: GTP cyclohydrolase FolE2 (301 aa).

The protein belongs to the GTP cyclohydrolase IV family.

The enzyme catalyses GTP + H2O = 7,8-dihydroneopterin 3'-triphosphate + formate + H(+). It participates in cofactor biosynthesis; 7,8-dihydroneopterin triphosphate biosynthesis; 7,8-dihydroneopterin triphosphate from GTP: step 1/1. Functionally, converts GTP to 7,8-dihydroneopterin triphosphate. This chain is GTP cyclohydrolase FolE2, found in Pseudomonas syringae pv. tomato (strain ATCC BAA-871 / DC3000).